Here is an 868-residue protein sequence, read N- to C-terminus: Probable mixed-linked glucan synthase 3 (868 aa).

Residues 36–68 (ERKAAGGGGGGAKGKHWAAADKGERRAAKECGG) are disordered. Over residues 53 to 68 (AAADKGERRAAKECGG) the composition is skewed to basic and acidic residues. Helical transmembrane passes span 86–106 (LLHP…LFFG) and 116–136 (IMWF…SWLL). Residue Asp-211 is part of the active site. Residues Asp-412 and Asp-414 each contribute to the substrate site. The active site involves Asp-573. The next 6 helical transmembrane spans lie at 649-669 (IYPV…MWLI), 686-706 (LLMI…WAGI), 717-737 (FFMI…VVNL), 771-791 (MLIP…VAIG), 809-829 (IMGL…ALAI), and 837-857 (PIIL…VYVA).

This sequence belongs to the glycosyltransferase 2 family. Plant cellulose synthase-like F subfamily.

The protein resides in the golgi apparatus membrane. Its function is as follows. May catalyze both beta-1,3 and beta-1,4 glycosidic linkage on beta-D-glucan. Essential for (1,3;1,4)-beta-D-glucans synthesis in grasses and cereals (Poaceae). The mixed-linked glucans (which are not present in walls of dicotyledons or most other monocotyledonous plants) are particularly important constituents of the walls of the starchy endosperm and aleurone cells of cereal grains such as oats, wheat, rice and barley. They can account for up to 70% by weight of the wall. This chain is Probable mixed-linked glucan synthase 3 (CSLF3), found in Oryza sativa subsp. indica (Rice).